The chain runs to 287 residues: Survival motor neuron protein (287 aa).

The interval 1–27 is disordered; sequence MGGGGGLPEPEDSVLFRRGTGQSDDSD. Positions 8–39 are P1 (binding site for GEMIN2); that stretch reads PEPEDSVLFRRGTGQSDDSDIWDDTALIKAYD. The residue at position 20 (threonine 20) is a Phosphothreonine. 2 positions are modified to phosphoserine: serine 23 and serine 26. Lysine 46 participates in a covalent cross-link: Glycyl lysine isopeptide (Lys-Gly) (interchain with G-Cter in SUMO2). The tract at residues 52-83 is disordered; the sequence is GDISEASDKPKSTPKRKPAKKNKSQKKNATTA. The segment covering 63 to 77 has biased composition (basic residues); that stretch reads STPKRKPAKKNKSQK. Phosphothreonine is present on threonine 64. One can recognise a Tudor domain in the interval 86–146; that stretch reads QWKVGDKCSA…LSPACEVANN (61 aa). A required for interaction with RPP20/POP7 region spans residues 92 to 205; that stretch reads KCSAVWSEDG…MSGSGLGPGK (114 aa). The tract at residues 148–216 is disordered; it reads EQDTQENENE…GVKFSGPPPP (69 aa). A compositionally biased stretch (polar residues) spans 157-180; sequence ESQISTDESENSSRSPGNKPNNIK. Residue lysine 205 forms a Glycyl lysine isopeptide (Lys-Gly) (interchain with G-Cter in SUMO2) linkage. The segment at 234 to 261 is P2 (binding site for SM B); that stretch reads PPIIPPPPPICPDSLDDADALGSMLISW. The required for interaction with SYNCRIP stretch occupies residues 273 to 287; sequence GFKQNQKEGRCSHFN.

The protein belongs to the SMN family. As to quaternary structure, homooligomer; may form higher order homooligomers in the dimer to octamer range. Part of the core SMN complex that contains SMN1, GEMIN2/SIP1, DDX20/GEMIN3, GEMIN4, GEMIN5, GEMIN6, GEMIN7, GEMIN8 and STRAP/UNRIP. Part of the SMN-Sm complex that contains SMN1, GEMIN2/SIP1, DDX20/GEMIN3, GEMIN4, GEMIN5, GEMIN6, GEMIN7, GEMIN8, STRAP/UNRIP and the Sm proteins SNRPB, SNRPD1, SNRPD2, SNRPD3, SNRPE, SNRPF and SNRPG. Component of an import snRNP complex composed of KPNB1, RNUT1, SMN1 and ZNF259. Interacts with DDX20, FBL, NOLA1, RNUT1, SYNCRIP and with several spliceosomal snRNP core Sm proteins, including SNRPB, SNRPD1, SNRPD2, SNRPD3, SNRPE and ILF3. Interacts with GEMIN2; the interaction is direct. Interacts with GEMIN3; the interaction is direct. Interacts with GEMIN8; the interaction is direct. Interacts with SNRPB; the interaction is direct. Interacts (via Tudor domain) with SNRPD1 (via C-terminus); the interaction is direct. Interacts with SNRPD2; the interaction is direct. Interacts (via Tudor domain) with SNRPD3 (via C-terminus); the interaction is direct. Interacts with SNRPE; the interaction is direct. Interacts with OSTF1, LSM10, LSM11 and RPP20/POP7. Interacts (via C-terminal region) with ZPR1 (via C-terminal region). Interacts (via Tudor domain) with COIL. Interacts with SETX; recruits SETX to POLR2A. Interacts with POLR2A (via the C-terminal domain (CTD)). Interacts with PRMT5. Interacts with XRN2. Interacts (via C-terminus) with FMR1 (via C-terminus); the interaction is direct and occurs in a RNA-independent manner. Interacts (via Tudor domain) with SF3B2 ('Arg-508'-methylated form). Interacts with WRAP53/TCAB1. Interacts (via Tudor domain) with ELAVL4 in an RNA-independent manner; the interaction is required for localization of ELAVL4 to RNA granules. Interacts with FRG1.

The protein resides in the nucleus. Its subcellular location is the gem. The protein localises to the cajal body. It is found in the cytoplasm. It localises to the cytoplasmic granule. The protein resides in the perikaryon. Its subcellular location is the cell projection. The protein localises to the neuron projection. It is found in the axon. It localises to the myofibril. The protein resides in the sarcomere. Its subcellular location is the z line. Functionally, the SMN complex catalyzes the assembly of small nuclear ribonucleoproteins (snRNPs), the building blocks of the spliceosome, and thereby plays an important role in the splicing of cellular pre-mRNAs. Most spliceosomal snRNPs contain a common set of Sm proteins SNRPB, SNRPD1, SNRPD2, SNRPD3, SNRPE, SNRPF and SNRPG that assemble in a heptameric protein ring on the Sm site of the small nuclear RNA to form the core snRNP (Sm core). In the cytosol, the Sm proteins SNRPD1, SNRPD2, SNRPE, SNRPF and SNRPG are trapped in an inactive 6S pICln-Sm complex by the chaperone CLNS1A that controls the assembly of the core snRNP. To assemble core snRNPs, the SMN complex accepts the trapped 5Sm proteins from CLNS1A forming an intermediate. Binding of snRNA inside 5Sm ultimately triggers eviction of the SMN complex, thereby allowing binding of SNRPD3 and SNRPB to complete assembly of the core snRNP. Within the SMN complex, SMN1 acts as a structural backbone and together with GEMIN2 it gathers the Sm complex subunits. Ensures the correct splicing of U12 intron-containing genes that may be important for normal motor and proprioceptive neurons development. Also required for resolving RNA-DNA hybrids created by RNA polymerase II, that form R-loop in transcription terminal regions, an important step in proper transcription termination. May also play a role in the metabolism of small nucleolar ribonucleoprotein (snoRNPs). This is Survival motor neuron protein (SMN1) from Canis lupus familiaris (Dog).